We begin with the raw amino-acid sequence, 414 residues long: Putative transporter YoaB (414 aa).

Residues 1–11 are Cytoplasmic-facing; sequence MLDKIGIPKRL. Residues 12-32 traverse the membrane as a helical segment; it reads AWGFLGVVLFMMGDGLEQGWL. Residues 33 to 47 are Extracellular-facing; that stretch reads SPFLIENGLTVQQSA. A helical transmembrane segment spans residues 48–68; that stretch reads SIFSIYGIALAIASWFSGVCL. Topologically, residues 69–75 are cytoplasmic; it reads EAFGAKR. The chain crosses the membrane as a helical span at residues 76-96; the sequence is TMFMGLLFYVIGTAAFIVFGF. Topologically, residues 97 to 107 are extracellular; the sequence is EQLNLPVMYVT. A helical membrane pass occupies residues 108–128; the sequence is YFVKGLGYPLFAYSFLTWVIY. Residues 129-136 lie on the Cytoplasmic side of the membrane; sequence RTPQSKLS. The helical transmembrane segment at 137–157 threads the bilayer; sequence TAVGWFWIAYCLGMFVFGAWY. Topologically, residues 158–167 are extracellular; that stretch reads SSYAIKAFGY. The helical transmembrane segment at 168 to 188 threads the bilayer; the sequence is LNTLWSSIFWVCLGAFFALFI. Residues 189–219 are Cytoplasmic-facing; sequence NKDRFEKKKRKRSETAEELLKGVTILFTNPR. Residues 220–240 traverse the membrane as a helical segment; it reads VLTGGIIRIINSIGTYGFPVF. Residues 241 to 255 lie on the Extracellular side of the membrane; the sequence is LPMHMAQHGISTNVW. Residues 256–276 traverse the membrane as a helical segment; it reads LQIWGTIFLGNIVFNLIFGIV. Topologically, residues 277–286 are cytoplasmic; that stretch reads GDKFGWKNTV. A helical membrane pass occupies residues 287–307; sequence IWFGGVGCGIFTVLLYYAPVF. Residues 308–316 are Extracellular-facing; sequence SGGSLAVVS. The helical transmembrane segment at 317–337 threads the bilayer; the sequence is VIGFIWGGLLAGYVPIGAIVP. At 338–343 the chain is on the cytoplasmic side; it reads TVAGKD. The helical transmembrane segment at 344–364 threads the bilayer; the sequence is KGAAMSVLNLAAGLSAFVGPA. Over 365–375 the chain is Extracellular; that stretch reads LAWLFIGLVGA. Residues 376–398 form a helical membrane-spanning segment; sequence QGVVWIFAALYLASAVLTKCIHI. The Cytoplasmic segment spans residues 399 to 414; it reads PEEKAVKEETSPQYAS.

Belongs to the major facilitator superfamily. Sugar transporter (TC 2.A.1.1) family. CsbX subfamily.

It is found in the cell membrane. This Bacillus subtilis (strain 168) protein is Putative transporter YoaB (yoaB).